The sequence spans 553 residues: Cytokine-like nuclear factor N-PAC (553 aa).

The 59-residue stretch at 8-66 folds into the PWWP domain; sequence LGDLVWGKLGRYPPWPGKIVNPPKDLKKPRGKKCFFVKFFGTEDHAWIKVEQLKPYHAH. 2 stretches are compositionally biased toward basic and acidic residues: residues 92–145 and 162–182; these read RAKG…EGKK and RAQEQSPRKRGRPPKDEKDLS. The segment at 92–190 is disordered; sequence RAKGKDQTSS…LSIPESSTVK (99 aa). Phosphoserine is present on Ser-130. Residue Lys-135 forms a Glycyl lysine isopeptide (Lys-Gly) (interchain with G-Cter in SUMO2) linkage. Ser-167 carries the post-translational modification Phosphoserine. The segment at residues 168–180 is a DNA-binding region (a.T hook); sequence PRKRGRPPKDEKD. Glycyl lysine isopeptide (Lys-Gly) (interchain with G-Cter in SUMO2) cross-links involve residues Lys-176, Lys-179, Lys-201, and Lys-211. The tract at residues 214–217 is interaction with histone H3; sequence DPHF. The interaction with KDM1B stretch occupies residues 216-225; that stretch reads HFHHFLLSQT. Glycyl lysine isopeptide (Lys-Gly) (interchain with G-Cter in SUMO2) cross-links involve residues Lys-227, Lys-237, Lys-240, and Lys-269. Residues 261-553 form a dehydrogenase domain region; it reads GSVTPTDKKI…MSAVYRAYIH (293 aa). 271–285 is a binding site for NAD(+); the sequence is GFLGLGLMGSGIVSN. Lys-302 participates in a covalent cross-link: Glycyl lysine isopeptide (Lys-Gly) (interchain with G-Cter in SUMO2). Positions 362 and 505 each coordinate NAD(+). Ser-540 is subject to Phosphoserine.

This sequence belongs to the HIBADH-related family. NP60 subfamily. Homotetramere. Interacts with MAPK14. Interacts with KDM1B at nucleosomes; this interaction stimulates H3K4me1 and H3K4me2 demethylation. Binds to mononucleosomes. Interacts with GATA4; the interaction is required for a synergistic activation of GATA4 target genes transcription.

It is found in the nucleus. Its subcellular location is the chromosome. Functionally, cytokine-like nuclear factor with chromatin gene reader activity involved in chromatin modification and regulation of gene expression. Acts as a nucleosome-destabilizing factor that is recruited to genes during transcriptional activation. Recognizes and binds histone H3 without a preference for specific epigenetic markers and also binds DNA. Interacts with KDM1B and promotes its histone demethylase activity by facilitating the capture of H3 tails, they form a multifunctional enzyme complex that modifies transcribed chromatin and facilitates Pol II transcription through nucleosomes. Stimulates the acetylation of 'Lys-56' of nucleosomal histone H3 (H3K56ac) by EP300. With GATA4, co-binds a defined set of heart development genes and coregulates their expression during cardiomyocyte differentiation. Regulates p38 MAP kinase activity by mediating stress activation of MAPK14/p38alpha and specifically regulating MAPK14 signaling. Indirectly promotes phosphorylation of MAPK14 and activation of ATF2. The phosphorylation of MAPK14 requires upstream activity of MAP2K4 and MAP2K6. The polypeptide is Cytokine-like nuclear factor N-PAC (GLYR1) (Bos taurus (Bovine)).